A 1085-amino-acid polypeptide reads, in one-letter code: DNA mismatch repair protein MutS (1085 aa).

Positions 533–564 (DEDLFGEEEQNAPPVGSSNHAVGTQPSADDEA) are disordered. Over residues 548-559 (GSSNHAVGTQPS) the composition is skewed to polar residues. 812–819 (GPNMSGKS) contributes to the ATP binding site. A disordered region spans residues 997 to 1042 (ERRAPRSAPPTVPARGDDRRSAGRASSSGAGAARGEQGRTLPDGQL). The span at 1019-1031 (GRASSSGAGAARG) shows a compositional bias: low complexity.

The protein belongs to the DNA mismatch repair MutS family.

This protein is involved in the repair of mismatches in DNA. It is possible that it carries out the mismatch recognition step. This protein has a weak ATPase activity. The protein is DNA mismatch repair protein MutS of Roseiflexus sp. (strain RS-1).